Consider the following 139-residue polypeptide: Phosphoribosyl-AMP cyclohydrolase (139 aa).

A Mg(2+)-binding site is contributed by Asp-92. Cys-93 is a Zn(2+) binding site. Residues Asp-94 and Asp-96 each contribute to the Mg(2+) site. Zn(2+) is bound by residues Cys-111 and Cys-118.

The protein belongs to the PRA-CH family. In terms of assembly, homodimer. Mg(2+) serves as cofactor. It depends on Zn(2+) as a cofactor.

The protein localises to the cytoplasm. The enzyme catalyses 1-(5-phospho-beta-D-ribosyl)-5'-AMP + H2O = 1-(5-phospho-beta-D-ribosyl)-5-[(5-phospho-beta-D-ribosylamino)methylideneamino]imidazole-4-carboxamide. The protein operates within amino-acid biosynthesis; L-histidine biosynthesis; L-histidine from 5-phospho-alpha-D-ribose 1-diphosphate: step 3/9. Its function is as follows. Catalyzes the hydrolysis of the adenine ring of phosphoribosyl-AMP. In Caulobacter vibrioides (strain ATCC 19089 / CIP 103742 / CB 15) (Caulobacter crescentus), this protein is Phosphoribosyl-AMP cyclohydrolase.